Reading from the N-terminus, the 151-residue chain is Small ribosomal subunit protein uS19 (151 aa).

It belongs to the universal ribosomal protein uS19 family.

The polypeptide is Small ribosomal subunit protein uS19 (RPS15) (Picea mariana (Black spruce)).